The primary structure comprises 279 residues: Lyso-glycine lipid O-acyltransferase (279 aa).

Belongs to the O-acyltransferase GlsA family.

It catalyses the reaction a lyso-glycine lipid + a fatty acyl-[ACP] = a glycine lipid + holo-[ACP]. The enzyme catalyses N-[(3R)-3-hydroxyhexadecanoyl]-glycine + hexadecanoyl-[ACP] = N-[(3R)-3-(hexadecanoyloxy)hexadecanoyl]-glycine + holo-[ACP]. It participates in lipid metabolism. In terms of biological role, is involved in the production of glycine lipids (GL), which are phosphorus-free membrane lipids. Catalyzes the second step of GL biosynthesis, i.e. the O-acylation of the hydroxyl group of lyso-glycine lipids, resulting in the production of the mature diacylated glycine lipids. This Phocaeicola vulgatus (strain ATCC 8482 / DSM 1447 / JCM 5826 / CCUG 4940 / NBRC 14291 / NCTC 11154) (Bacteroides vulgatus) protein is Lyso-glycine lipid O-acyltransferase.